The following is a 396-amino-acid chain: D-alanine--D-alanine ligase (396 aa).

The 207-residue stretch at 141-347 (KMLWQAAGLP…PQDLMAQLLS (207 aa)) folds into the ATP-grasp domain. 174–229 (ETRLGYPLFVKPAQAGSSVGASAVQTRAPLIPAIEAAFQWDEVVLVERYVRAREIE) contributes to the ATP binding site. Residues Asp-301, Glu-314, and Asn-316 each contribute to the Mg(2+) site. Residues 374 to 396 (AAHDPDAQGDDWDQRDSNPLPTA) form a disordered region.

The protein belongs to the D-alanine--D-alanine ligase family. The cofactor is Mg(2+). Mn(2+) serves as cofactor.

The protein resides in the cytoplasm. The enzyme catalyses 2 D-alanine + ATP = D-alanyl-D-alanine + ADP + phosphate + H(+). It participates in cell wall biogenesis; peptidoglycan biosynthesis. Its function is as follows. Cell wall formation. The polypeptide is D-alanine--D-alanine ligase (Treponema pallidum (strain Nichols)).